Here is a 548-residue protein sequence, read N- to C-terminus: Glucose-6-phosphate isomerase (548 aa).

The active-site Proton donor is the Glu355. Residues His386 and Lys514 contribute to the active site.

This sequence belongs to the GPI family.

It localises to the cytoplasm. It catalyses the reaction alpha-D-glucose 6-phosphate = beta-D-fructose 6-phosphate. The protein operates within carbohydrate biosynthesis; gluconeogenesis. It functions in the pathway carbohydrate degradation; glycolysis; D-glyceraldehyde 3-phosphate and glycerone phosphate from D-glucose: step 2/4. Functionally, catalyzes the reversible isomerization of glucose-6-phosphate to fructose-6-phosphate. The protein is Glucose-6-phosphate isomerase of Proteus mirabilis (strain HI4320).